The following is a 311-amino-acid chain: 4-hydroxy-tetrahydrodipicolinate synthase (311 aa).

T51 is a binding site for pyruvate. Y140 acts as the Proton donor/acceptor in catalysis. K168 acts as the Schiff-base intermediate with substrate in catalysis. Residue I209 participates in pyruvate binding.

This sequence belongs to the DapA family. In terms of assembly, homotetramer; dimer of dimers.

It localises to the cytoplasm. It catalyses the reaction L-aspartate 4-semialdehyde + pyruvate = (2S,4S)-4-hydroxy-2,3,4,5-tetrahydrodipicolinate + H2O + H(+). The protein operates within amino-acid biosynthesis; L-lysine biosynthesis via DAP pathway; (S)-tetrahydrodipicolinate from L-aspartate: step 3/4. Its function is as follows. Catalyzes the condensation of (S)-aspartate-beta-semialdehyde [(S)-ASA] and pyruvate to 4-hydroxy-tetrahydrodipicolinate (HTPA). The chain is 4-hydroxy-tetrahydrodipicolinate synthase from Streptococcus pneumoniae (strain 70585).